A 119-amino-acid polypeptide reads, in one-letter code: Large ribosomal subunit protein bL19 (119 aa).

Belongs to the bacterial ribosomal protein bL19 family.

Its function is as follows. This protein is located at the 30S-50S ribosomal subunit interface and may play a role in the structure and function of the aminoacyl-tRNA binding site. The chain is Large ribosomal subunit protein bL19 from Arthrobacter sp. (strain FB24).